A 224-amino-acid polypeptide reads, in one-letter code: Ras-related protein RABA4b (224 aa).

A2 carries the N-acetylalanine modification. GTP is bound at residue 24–31; it reads GDSAVGKS. The Effector region signature appears at 46 to 54; it reads SKATIGVEF. Residues 72–76, 130–133, and 160–161 each bind GTP; these read DTAGQ, NKSD, and SA. S-geranylgeranyl cysteine attachment occurs at residues C220 and C221.

It belongs to the small GTPase superfamily. Rab family. Interacts with TCTP1. As to expression, expressed in roots, stems, leaves and flowers. Expressed in tips of growing root hair cells.

The protein localises to the early endosome membrane. The protein resides in the golgi apparatus. It is found in the trans-Golgi network membrane. Regulator of membrane trafficking. May be required for secretion of cell wall components in cells. This is Ras-related protein RABA4b from Arabidopsis thaliana (Mouse-ear cress).